The chain runs to 138 residues: Transcription antitermination protein NusB (138 aa).

The protein belongs to the NusB family.

Involved in transcription antitermination. Required for transcription of ribosomal RNA (rRNA) genes. Binds specifically to the boxA antiterminator sequence of the ribosomal RNA (rrn) operons. The polypeptide is Transcription antitermination protein NusB (Helicobacter pylori (strain Shi470)).